The following is a 256-amino-acid chain: MKPLELDVFLCRTDNFGVLVHDPETGFTAAIDAPEEAPILEAATRRGWKITHIFTTHHHTDHVAANLALKEQFGCEIIGPINEAIAIPGLDRTMADGDSFLFGDHTVKVIETPGHTAGHICYHFVDDKLLFAADTLFALGCGRLFERPAADMWHSLQKLAVLPDETAVYFGHEYTLSNARFALTVDPDNERLKSRAAEIEALRAEGKFTVPTTLGLEKETNPFLRAADPAIRRHLIMEGKTNEEVFAEIRKRKDNF.

Histidine 57, histidine 59, aspartate 61, histidine 62, histidine 115, aspartate 134, and histidine 172 together coordinate Zn(2+).

The protein belongs to the metallo-beta-lactamase superfamily. Glyoxalase II family. In terms of assembly, monomer. Requires Zn(2+) as cofactor.

It catalyses the reaction an S-(2-hydroxyacyl)glutathione + H2O = a 2-hydroxy carboxylate + glutathione + H(+). The protein operates within secondary metabolite metabolism; methylglyoxal degradation; (R)-lactate from methylglyoxal: step 2/2. Its function is as follows. Thiolesterase that catalyzes the hydrolysis of S-D-lactoyl-glutathione to form glutathione and D-lactic acid. The polypeptide is Hydroxyacylglutathione hydrolase (Rhizobium etli (strain ATCC 51251 / DSM 11541 / JCM 21823 / NBRC 15573 / CFN 42)).